A 267-amino-acid polypeptide reads, in one-letter code: 4-hydroxy-tetrahydrodipicolinate reductase (267 aa).

Residues 8 to 13 (GAAGRM) and Asp-34 contribute to the NAD(+) site. Arg-35 is a binding site for NADP(+). NAD(+)-binding positions include 98-100 (GTT) and 122-125 (AANF). The Proton donor/acceptor role is filled by His-155. A (S)-2,3,4,5-tetrahydrodipicolinate-binding site is contributed by His-156. The Proton donor role is filled by Lys-159. 165–166 (GT) contributes to the (S)-2,3,4,5-tetrahydrodipicolinate binding site.

It belongs to the DapB family.

It is found in the cytoplasm. It carries out the reaction (S)-2,3,4,5-tetrahydrodipicolinate + NAD(+) + H2O = (2S,4S)-4-hydroxy-2,3,4,5-tetrahydrodipicolinate + NADH + H(+). The catalysed reaction is (S)-2,3,4,5-tetrahydrodipicolinate + NADP(+) + H2O = (2S,4S)-4-hydroxy-2,3,4,5-tetrahydrodipicolinate + NADPH + H(+). It functions in the pathway amino-acid biosynthesis; L-lysine biosynthesis via DAP pathway; (S)-tetrahydrodipicolinate from L-aspartate: step 4/4. Functionally, catalyzes the conversion of 4-hydroxy-tetrahydrodipicolinate (HTPA) to tetrahydrodipicolinate. The protein is 4-hydroxy-tetrahydrodipicolinate reductase of Pseudomonas entomophila (strain L48).